Consider the following 240-residue polypeptide: Probable metal transport system ATP-binding protein TM_0124 (240 aa).

The 220-residue stretch at 4–223 (VEVKNLTYRI…LKKIFTDFDI (220 aa)) folds into the ABC transporter domain. 36–43 (GPNGAGKT) is an ATP binding site.

The protein belongs to the ABC transporter superfamily.

Part of an ATP-driven transport system TM_0123/TM_0124/TM_0125 for a metal. Probably responsible for energy coupling to the transport system. This chain is Probable metal transport system ATP-binding protein TM_0124, found in Thermotoga maritima (strain ATCC 43589 / DSM 3109 / JCM 10099 / NBRC 100826 / MSB8).